Here is a 393-residue protein sequence, read N- to C-terminus: Formate-dependent phosphoribosylglycinamide formyltransferase (393 aa).

N(1)-(5-phospho-beta-D-ribosyl)glycinamide contacts are provided by residues 20–21 (EL) and Glu-80. ATP-binding positions include Arg-112, Lys-153, 158 to 163 (SSGKGQ), 193 to 196 (EAFI), and Glu-201. Positions 117 to 306 (RLAAEDLNLP…EFELHVRAVL (190 aa)) constitute an ATP-grasp domain. Glu-265 and Glu-277 together coordinate Mg(2+). N(1)-(5-phospho-beta-D-ribosyl)glycinamide contacts are provided by residues Asp-284, Lys-354, and 361–362 (RR).

It belongs to the PurK/PurT family. In terms of assembly, homodimer.

It carries out the reaction N(1)-(5-phospho-beta-D-ribosyl)glycinamide + formate + ATP = N(2)-formyl-N(1)-(5-phospho-beta-D-ribosyl)glycinamide + ADP + phosphate + H(+). It functions in the pathway purine metabolism; IMP biosynthesis via de novo pathway; N(2)-formyl-N(1)-(5-phospho-D-ribosyl)glycinamide from N(1)-(5-phospho-D-ribosyl)glycinamide (formate route): step 1/1. Involved in the de novo purine biosynthesis. Catalyzes the transfer of formate to 5-phospho-ribosyl-glycinamide (GAR), producing 5-phospho-ribosyl-N-formylglycinamide (FGAR). Formate is provided by PurU via hydrolysis of 10-formyl-tetrahydrofolate. In Syntrophotalea carbinolica (strain DSM 2380 / NBRC 103641 / GraBd1) (Pelobacter carbinolicus), this protein is Formate-dependent phosphoribosylglycinamide formyltransferase.